Consider the following 807-residue polypeptide: Glycerol-3-phosphate acyltransferase (807 aa).

Positions 308 to 313 (CHRSHM) match the HXXXXD motif motif.

This sequence belongs to the GPAT/DAPAT family.

The protein localises to the cell inner membrane. The enzyme catalyses sn-glycerol 3-phosphate + an acyl-CoA = a 1-acyl-sn-glycero-3-phosphate + CoA. Its pathway is phospholipid metabolism; CDP-diacylglycerol biosynthesis; CDP-diacylglycerol from sn-glycerol 3-phosphate: step 1/3. This chain is Glycerol-3-phosphate acyltransferase, found in Shewanella frigidimarina (strain NCIMB 400).